The following is a 214-amino-acid chain: Adenylate kinase (214 aa).

10–15 provides a ligand contact to ATP; the sequence is GGGKGT. Residues 30 to 59 are NMP; the sequence is STGDMFRENVKGGTELGLKAKEYMDAGQLV. Residues Thr-31, Arg-36, 57-59, 85-88, and Gln-92 each bind AMP; these read QLV and GFPR. The segment at 126–163 is LID; it reads GRRVCRVCGATFHVLFNAPKEDGKCDKCGGELYQRSDD. An ATP-binding site is contributed by Arg-127. Positions 130 and 133 each coordinate Zn(2+). Residue 136-137 coordinates ATP; sequence TF. Zn(2+) contacts are provided by Cys-150 and Cys-153. AMP contacts are provided by Arg-160 and Arg-171. Gln-199 contacts ATP.

The protein belongs to the adenylate kinase family. As to quaternary structure, monomer.

It localises to the cytoplasm. The catalysed reaction is AMP + ATP = 2 ADP. Its pathway is purine metabolism; AMP biosynthesis via salvage pathway; AMP from ADP: step 1/1. Its function is as follows. Catalyzes the reversible transfer of the terminal phosphate group between ATP and AMP. Plays an important role in cellular energy homeostasis and in adenine nucleotide metabolism. The polypeptide is Adenylate kinase (Desulforudis audaxviator (strain MP104C)).